Consider the following 391-residue polypeptide: Large envelope protein (391 aa).

At Met-1 the chain carries N-acetylmethionine. The N-myristoyl glycine; by host moiety is linked to residue Gly-2. The tract at residues 2 to 108 (GLNQSTFNPL…PPLRDTHPQA (107 aa)) is pre-S1. The pre-S stretch occupies residues 2–163 (GLNQSTFNPL…FSTTGVPVST (162 aa)). Residues 2–170 (GLNQSTFNPL…VSTMDITSSG (169 aa)) lie on the Virion surface; in external conformation side of the membrane. At 2–242 (GLNQSTFNPL…PGYRWMCLRR (241 aa)) the chain is on the intravirion; in internal conformation side. The segment at 73-107 (LSVTVPDTPPPPSTNRDKGRKPTPATPPLRDTHPQ) is disordered. The tract at residues 109 to 163 (MTWNTSSFQSYLQNPKVRGLYFPAGGSTSSIVNPVPTTASTTSSSFSTTGVPVST) is pre-S2. Residues 171-191 (FLGPLLALQAVFFLLTKILTM) traverse the membrane as a helical segment. The Intravirion; in external conformation portion of the chain corresponds to 192-242 (PQSLDSLWTSLNFLGGTPACPGLNSQSPTSSHSPTCCPPTCPGYRWMCLRR). Residues 243-263 (SIIFLFILLLCLIFLLVLLDY) form a helical membrane-spanning segment. Over 264-339 (QGMLPVCPLL…WALARFSWLN (76 aa)) the chain is Virion surface. An N-linked (GlcNAc...) asparagine; by host glycan is attached at Asn-311. A helical membrane pass occupies residues 340–360 (SLLPFVQWFAGLSPTVWLLVI). The Intravirion segment spans residues 361-366 (WMMWFW). The helical transmembrane segment at 367-389 (GPSLFSILSPFLPLLPLFFWLWA) threads the bilayer. At 390 to 391 (YI) the chain is on the virion surface side.

Belongs to the orthohepadnavirus major surface antigen family. In its internal form (Li-HBsAg), interacts with the capsid protein and with the isoform S. Interacts with host chaperone CANX. As to quaternary structure, associates with host chaperone CANX through its pre-S2 N glycan; this association may be essential for isoform M proper secretion. In terms of assembly, interacts with isoform L. Interacts with the antigens of satellite virus HDV (HDVAgs); this interaction is required for encapsidation of HDV genomic RNA. Isoform M is N-terminally acetylated by host at a ratio of 90%, and N-glycosylated by host at the pre-S2 region. Post-translationally, myristoylated.

It is found in the virion membrane. In terms of biological role, the large envelope protein exists in two topological conformations, one which is termed 'external' or Le-HBsAg and the other 'internal' or Li-HBsAg. In its external conformation the protein attaches the virus to cell receptors and thereby initiating infection. This interaction determines the species specificity and liver tropism. This attachment induces virion internalization predominantly through caveolin-mediated endocytosis. The large envelope protein also assures fusion between virion membrane and endosomal membrane. In its internal conformation the protein plays a role in virion morphogenesis and mediates the contact with the nucleocapsid like a matrix protein. Its function is as follows. The middle envelope protein plays an important role in the budding of the virion. It is involved in the induction of budding in a nucleocapsid independent way. In this process the majority of envelope proteins bud to form subviral lipoprotein particles of 22 nm of diameter that do not contain a nucleocapsid. The chain is Large envelope protein from Woolly monkey hepatitis B virus (isolate Louisville) (WMHBV).